The chain runs to 465 residues: UDP-N-acetylmuramate--L-alanine ligase (465 aa).

An ATP-binding site is contributed by 112–118; it reads GTHGKTT.

Belongs to the MurCDEF family.

The protein localises to the cytoplasm. It catalyses the reaction UDP-N-acetyl-alpha-D-muramate + L-alanine + ATP = UDP-N-acetyl-alpha-D-muramoyl-L-alanine + ADP + phosphate + H(+). It functions in the pathway cell wall biogenesis; peptidoglycan biosynthesis. Its function is as follows. Cell wall formation. This Burkholderia pseudomallei (strain 1106a) protein is UDP-N-acetylmuramate--L-alanine ligase.